We begin with the raw amino-acid sequence, 420 residues long: Tyrosine-protein phosphatase non-receptor type 20 (420 aa).

Residues 1–11 (MSSPRDFRAEP) show a composition bias toward basic and acidic residues. Disordered stretches follow at residues 1 to 47 (MSSP…VFEN) and 68 to 108 (DVFE…SQAL). A compositionally biased stretch (polar residues) spans 31 to 41 (LPSSSQENTPR). Phosphoserine occurs at positions 76 and 120. The 254-residue stretch at 159 to 412 (IMQEFMALEL…HFCYDIVLEV (254 aa)) folds into the Tyrosine-protein phosphatase domain. Substrate-binding positions include aspartate 323, 353–359 (CSAGIGR), and glutamine 397. The active-site Phosphocysteine intermediate is the cysteine 353.

Belongs to the protein-tyrosine phosphatase family. Non-receptor class subfamily. As to expression, present in many cell lines (at protein level). Widely expressed.

It localises to the nucleus. The protein localises to the cytoplasm. Its subcellular location is the cytoskeleton. The protein resides in the microtubule organizing center. It is found in the centrosome. It catalyses the reaction O-phospho-L-tyrosyl-[protein] + H2O = L-tyrosyl-[protein] + phosphate. Functionally, tyrosine-protein phosphatase targeted to sites of actin polymerization in response of varied extracellular stimuli. Has tyrosine phosphatase activity towards various tyrosyl phosphorylated substrates. This chain is Tyrosine-protein phosphatase non-receptor type 20, found in Homo sapiens (Human).